The following is a 299-amino-acid chain: Acetylglutamate kinase (299 aa).

Residues 72-73 (GG), Arg-94, and Asn-196 each bind substrate.

It belongs to the acetylglutamate kinase family. ArgB subfamily.

It localises to the cytoplasm. The enzyme catalyses N-acetyl-L-glutamate + ATP = N-acetyl-L-glutamyl 5-phosphate + ADP. It participates in amino-acid biosynthesis; L-arginine biosynthesis; N(2)-acetyl-L-ornithine from L-glutamate: step 2/4. In terms of biological role, catalyzes the ATP-dependent phosphorylation of N-acetyl-L-glutamate. The sequence is that of Acetylglutamate kinase from Burkholderia cenocepacia (strain ATCC BAA-245 / DSM 16553 / LMG 16656 / NCTC 13227 / J2315 / CF5610) (Burkholderia cepacia (strain J2315)).